The following is a 118-amino-acid chain: V-type proton ATPase subunit G 2 (118 aa).

The segment at 23–91 (ADARKRKARR…QGMQSSQQRN (69 aa)) is disordered. A compositionally biased stretch (basic and acidic residues) spans 35–55 (QAKEEAQMEVEQYRREREQEF). 2 stretches are compositionally biased toward polar residues: residues 56-69 (QSKQ…QGNL) and 78-89 (RRQVQGMQSSQQ).

The protein belongs to the V-ATPase G subunit family. As to quaternary structure, V-ATPase is a heteromultimeric enzyme made up of two complexes: the ATP-hydrolytic V1 complex and the proton translocation V0 complex. The V1 complex consists of three catalytic AB heterodimers that form a heterohexamer, three peripheral stalks each consisting of EG heterodimers, one central rotor including subunits D and F, and the regulatory subunits C and H. The proton translocation complex V0 consists of the proton transport subunit a, a ring of proteolipid subunits c9c'', rotary subunit d, subunits e and f, and the accessory subunits ATP6AP1/Ac45 and ATP6AP2/PRR.

It localises to the melanosome. Its subcellular location is the cytoplasmic vesicle. The protein localises to the clathrin-coated vesicle membrane. Functionally, subunit of the V1 complex of vacuolar(H+)-ATPase (V-ATPase), a multisubunit enzyme composed of a peripheral complex (V1) that hydrolyzes ATP and a membrane integral complex (V0) that translocates protons. V-ATPase is responsible for acidifying and maintaining the pH of intracellular compartments and in some cell types, is targeted to the plasma membrane, where it is responsible for acidifying the extracellular environment. The polypeptide is V-type proton ATPase subunit G 2 (Atp6v1g2) (Mus musculus (Mouse)).